A 474-amino-acid chain; its full sequence is UDP-N-acetylmuramate--L-alanine ligase (474 aa).

Residue 122-128 coordinates ATP; the sequence is GTHGKTT.

The protein belongs to the MurCDEF family.

It is found in the cytoplasm. It carries out the reaction UDP-N-acetyl-alpha-D-muramate + L-alanine + ATP = UDP-N-acetyl-alpha-D-muramoyl-L-alanine + ADP + phosphate + H(+). Its pathway is cell wall biogenesis; peptidoglycan biosynthesis. Functionally, cell wall formation. In Saccharophagus degradans (strain 2-40 / ATCC 43961 / DSM 17024), this protein is UDP-N-acetylmuramate--L-alanine ligase.